We begin with the raw amino-acid sequence, 455 residues long: Chitin deacetylase 2 (455 aa).

The signal sequence occupies residues 1 to 19; it reads MIPSTAAALLTLTAGAAFA. N-linked (GlcNAc...) asparagine glycosylation is found at Asn86, Asn98, Asn122, and Asn142. The 191-residue stretch at 157-347 folds into the NodB homology domain; sequence MTWGLGFDDG…IKSAFNYIVP (191 aa). Asp164 functions as the Proton acceptor in the catalytic mechanism. Asp164 contacts acetate. Asp165 serves as a coordination point for Co(2+). The N-linked (GlcNAc...) asparagine glycan is linked to Asn168. The Co(2+) site is built by His214 and His218. Tyr255 contacts acetate. Asn270 and Asn308 each carry an N-linked (GlcNAc...) asparagine glycan. His321 functions as the Proton donor in the catalytic mechanism. Residues Asn325, Asn353, Asn362, and Asn377 are each glycosylated (N-linked (GlcNAc...) asparagine). The segment at 381–423 is disordered; that stretch reads STTQKDGSSSTNTASGSGAAGSASATSSSDDSSSSGGSSGSSG. Residue Asn426 is glycosylated (N-linked (GlcNAc...) asparagine). Residue Ser429 is the site of GPI-anchor amidated serine attachment. Residues 430–455 constitute a propeptide, removed in mature form; sequence GALGMFDSLSGVGLILGGVVAGVMLL.

Belongs to the polysaccharide deacetylase family. The cofactor is Co(2+). The GPI anchor is required for the attachment to the cell membrane but not for cell surface targeting.

It is found in the secreted. The protein resides in the cell wall. The protein localises to the cell membrane. The catalysed reaction is [(1-&gt;4)-N-acetyl-beta-D-glucosaminyl](n) + n H2O = chitosan + n acetate. In terms of biological role, hydrolyzes the N-acetamido groups of N-acetyl-D-glucosamine residues in chitin to form chitosan and acetate. Chitosan is required to anchor melanin to the cell wall, for maintenance of cell wall integrity, and for proper cytokinesis. Chitosan offers an advantage during infection as it is less readily detected than chitin by host immunosurveillance mechanisms. This is Chitin deacetylase 2 from Cryptococcus neoformans var. grubii serotype A (strain H99 / ATCC 208821 / CBS 10515 / FGSC 9487) (Filobasidiella neoformans var. grubii).